A 2242-amino-acid chain; its full sequence is Transcription factor sma-9 (2242 aa).

Residues 120–383 (HQLAQQQAQQ…QQAQQAQLAQ (264 aa)) are a coiled coil. Over residues 317–330 (AAQQAQAQNNASQQ) the composition is skewed to low complexity. Disordered regions lie at residues 317 to 344 (AAQQ…SSTP), 494 to 553 (TPVA…SMSD), 583 to 617 (GAQS…SRSQ), 712 to 754 (LAAH…SSFP), and 1323 to 1349 (EDST…SPPL). Positions 331–344 (RPSVASTPALSSTP) are enriched in polar residues. Low complexity-rich tracts occupy residues 494-523 (TPVA…ATSS) and 539-550 (SSSKAASSGNES). Residues 583–601 (GAQSSVDHDSNSGGSTRTS) are compositionally biased toward polar residues. The segment covering 1324–1338 (DSTSAEPSTSGQSLL) has biased composition (polar residues). 5 C2H2-type zinc fingers span residues 1447–1469 (YICD…IKSH), 1475–1499 (FNCT…SKTH), 1700–1722 (LKCD…QHTH), 1734–1760 (YQCS…HGVH), and 1790–1814 (FMCV…SKTH). The span at 2029-2039 (SITSPIVSSST) shows a compositional bias: low complexity. 2 disordered regions span residues 2029 to 2059 (SITS…PTHT) and 2085 to 2107 (STDK…PRPI). Residues 2085 to 2099 (STDKAHASESLSDRL) show a composition bias toward basic and acidic residues. 2 consecutive C2H2-type zinc fingers follow at residues 2111-2134 (TKCQ…HVDH) and 2143-2167 (YKCP…VTAH). The segment at 2219–2242 (HELYAQTQQGAGSSTSNQSPKAAN) is disordered. Positions 2223-2242 (AQTQQGAGSSTSNQSPKAAN) are enriched in polar residues.

As to expression, expressed in the ventral nerve cord (VNC), pharynx, intestine and seam cells (at protein level).

The protein resides in the nucleus. Its function is as follows. Transcription factor, probably acting as a transcriptional activator and repressor, involved in the TGF-beta-like dbl-1 signaling pathway. Plays a role in regulation of body size, and patterning of male-specific genital sensilla (simple sense organs), known as rays, and mating-associated structures, spicules. Required for the dorsoventral patterning of the postembryonic mesodermal lineage (M lineage), acting by antagonizing the TGF-beta-like dbl-1 signaling pathway, in part by repressing expression of transcription factor unc-130. Involved in egg-laying, perhaps via modulation of cholinergic neurotransmission. Involved in production of reactive oxygen species (ROS), acting downstream of the dbl-1 signaling pathway. Plays a role in the mitochondrial unfolded protein response (mtUPR). May play a role in modulating lifespan and in responses to proteotoxic stress. In terms of biological role, transcription factor, probably acting as a transcriptional activator. Required for patterning of male-specific genital sensilla (simple sense organs), known as rays. Dispensable for regulation of body size. In Caenorhabditis elegans, this protein is Transcription factor sma-9.